The chain runs to 417 residues: NADH-quinone oxidoreductase subunit D (417 aa).

Belongs to the complex I 49 kDa subunit family. NDH-1 is composed of 14 different subunits. Subunits NuoB, C, D, E, F, and G constitute the peripheral sector of the complex.

It localises to the cell inner membrane. The catalysed reaction is a quinone + NADH + 5 H(+)(in) = a quinol + NAD(+) + 4 H(+)(out). Its function is as follows. NDH-1 shuttles electrons from NADH, via FMN and iron-sulfur (Fe-S) centers, to quinones in the respiratory chain. The immediate electron acceptor for the enzyme in this species is believed to be ubiquinone. Couples the redox reaction to proton translocation (for every two electrons transferred, four hydrogen ions are translocated across the cytoplasmic membrane), and thus conserves the redox energy in a proton gradient. In Cupriavidus necator (strain ATCC 17699 / DSM 428 / KCTC 22496 / NCIMB 10442 / H16 / Stanier 337) (Ralstonia eutropha), this protein is NADH-quinone oxidoreductase subunit D.